A 139-amino-acid chain; its full sequence is Putative pre-16S rRNA nuclease (139 aa).

This sequence belongs to the YqgF nuclease family.

The protein localises to the cytoplasm. Functionally, could be a nuclease involved in processing of the 5'-end of pre-16S rRNA. The chain is Putative pre-16S rRNA nuclease from Streptococcus thermophilus (strain ATCC BAA-491 / LMD-9).